A 394-amino-acid chain; its full sequence is Phosphoglycerate kinase (394 aa).

Residues 21 to 23, arginine 36, 59 to 62, arginine 118, and arginine 151 contribute to the substrate site; these read DFN and HLGR. Phosphoserine is present on serine 183. ATP contacts are provided by lysine 201 and glycine 292. At threonine 299 the chain carries Phosphothreonine. ATP contacts are provided by residues glutamate 323 and 350–353; that span reads GGDS.

The protein belongs to the phosphoglycerate kinase family. As to quaternary structure, monomer.

It localises to the cytoplasm. It catalyses the reaction (2R)-3-phosphoglycerate + ATP = (2R)-3-phospho-glyceroyl phosphate + ADP. It functions in the pathway carbohydrate degradation; glycolysis; pyruvate from D-glyceraldehyde 3-phosphate: step 2/5. The polypeptide is Phosphoglycerate kinase (Bacillus cereus (strain B4264)).